A 190-amino-acid chain; its full sequence is Putative serine carboxypeptidase-like 54 (190 aa).

A signal peptide spans 1–25 (MATKTFSLPFLLIVCIFSQLSSTFG). N-linked (GlcNAc...) asparagine glycosylation is found at Asn58, Asn59, and Asn105.

This sequence belongs to the peptidase S10 family.

It localises to the secreted. The sequence is that of Putative serine carboxypeptidase-like 54 (SCPL54) from Arabidopsis thaliana (Mouse-ear cress).